The sequence spans 529 residues: MQNAVIYQPVQIEYLKKTSDLFSEQQLADSFVLIFHLKGNGYISIGTNTNPLQKKTLYVCPPNETFGFTPAADGHIDACIIRLLSYIKETGQDIFTPCTESELAKLKLMNVSHIENLAVRLQELAALWNESSQLSQLKCVIEVQSLIYDLFTASLSDQTDTHSAIEKTKHYIETHADTKITLAQLSQMAGISAKHYSESFKKWTGQSVTEFITKTRITKAKRLMAKSNCKLKEIAHQTGYQDEFYFSRIFKKYTGCSPTSYMKKRRKKIAAYGRGTMGHLIPLHHIPFAAALHPKWTSYYYQHYSTDIPVQLSAYRFNEKWEENLYTLSQAEPDVIVSMDSISPEEQDRLNRIAEVMYLPSEESWRTHFLQTASFLKEESEAEKWLADYDQQTTAAKKTLQHVQGLRFLFLRLHKQNFYLAHNRSVREVFFGDLGFSSATTADTPSEQAISLENIANYQADCMMLFLFKEPETIAYYQQLQQTEAWQNLSAVRDNRVYLLSLDPWNEYSACGHERIVQQTVSLLSGDCP.

A DNA-binding region (H-T-H motif) is located at residues 182–201 (LAQLSQMAGISAKHYSESFK). Residues 268 to 528 (KIAAYGRGTM…QTVSLLSGDC (261 aa)) enclose the Fe/B12 periplasmic-binding domain.

As to quaternary structure, binds with high affinity to both apo-bacillibactin and iron-bacillibactin.

It is found in the cytoplasm. In terms of biological role, in iron-limited conditions, activates expression of the feuABCybbA operon, which encodes the bacillibactin uptake system. Acts by binding directly to a conserved direct repeat element upstream of the feuA promoter. Activity is increased in the presence of bacillibactin. This Bacillus subtilis (strain 168) protein is HTH-type transcriptional activator Btr (btr).